A 148-amino-acid chain; its full sequence is 3-hydroxyacyl-[acyl-carrier-protein] dehydratase FabZ (148 aa).

Residue histidine 48 is part of the active site.

This sequence belongs to the thioester dehydratase family. FabZ subfamily.

Its subcellular location is the cytoplasm. It catalyses the reaction a (3R)-hydroxyacyl-[ACP] = a (2E)-enoyl-[ACP] + H2O. Functionally, involved in unsaturated fatty acids biosynthesis. Catalyzes the dehydration of short chain beta-hydroxyacyl-ACPs and long chain saturated and unsaturated beta-hydroxyacyl-ACPs. The polypeptide is 3-hydroxyacyl-[acyl-carrier-protein] dehydratase FabZ (Campylobacter concisus (strain 13826)).